The chain runs to 176 residues: Adenine phosphoribosyltransferase (176 aa).

The protein belongs to the purine/pyrimidine phosphoribosyltransferase family. In terms of assembly, homodimer.

It is found in the cytoplasm. The enzyme catalyses AMP + diphosphate = 5-phospho-alpha-D-ribose 1-diphosphate + adenine. Its pathway is purine metabolism; AMP biosynthesis via salvage pathway; AMP from adenine: step 1/1. Catalyzes a salvage reaction resulting in the formation of AMP, that is energically less costly than de novo synthesis. In Bacteroides thetaiotaomicron (strain ATCC 29148 / DSM 2079 / JCM 5827 / CCUG 10774 / NCTC 10582 / VPI-5482 / E50), this protein is Adenine phosphoribosyltransferase.